Reading from the N-terminus, the 219-residue chain is Pollen-specific protein SF3 (219 aa).

2 consecutive LIM zinc-binding domains span residues glutamine 9–lysine 109 and cysteine 110–lysine 167. The segment at valine 181–valine 219 is disordered. Residues alanine 185 to alanine 202 are compositionally biased toward low complexity. Residues aspartate 203 to valine 219 are compositionally biased toward polar residues.

In terms of tissue distribution, pollen.

Could possibly involved in controlling pollen-specific processes such as male gamete maturation, pollen tube formation, or even fertilization. The chain is Pollen-specific protein SF3 (SF3) from Helianthus annuus (Common sunflower).